A 553-amino-acid chain; its full sequence is Putative transport protein YidE (553 aa).

5 helical membrane passes run 4-24, 28-48, 65-85, 95-115, and 158-178; these read IALT…IGNI, GVGF…HFVD, FGLI…FFAS, LFAV…HKIF, and MSYA…MWLM. 2 RCK C-terminal domains span residues 192 to 276 and 279 to 361; these read KHES…VIGK and DTSL…VVGN. Transmembrane regions (helical) follow at residues 371–391, 393–413, 437–457, 464–484, 493–513, and 533–553; these read MLPV…PLFV, GFPV…ALIL, LGIV…FVDT, LSWI…VGLL, YLTL…LAFA, and LVMF…WGMG.

Belongs to the AAE transporter (TC 2.A.81) family. YidE subfamily.

It localises to the cell membrane. The polypeptide is Putative transport protein YidE (Salmonella heidelberg (strain SL476)).